We begin with the raw amino-acid sequence, 151 residues long: Small ribosomal subunit protein bS6 (151 aa).

The tract at residues 97-151 (EAEPSAMMQKRDRDDRKDRDRGDRPRRRDDDFGGGDRGDRGDRGDRPERNFGGEN) is disordered. The span at 105-151 (QKRDRDDRKDRDRGDRPRRRDDDFGGGDRGDRGDRGDRPERNFGGEN) shows a compositional bias: basic and acidic residues.

Belongs to the bacterial ribosomal protein bS6 family.

Its function is as follows. Binds together with bS18 to 16S ribosomal RNA. In Methylorubrum extorquens (strain CM4 / NCIMB 13688) (Methylobacterium extorquens), this protein is Small ribosomal subunit protein bS6.